Consider the following 133-residue polypeptide: Small ribosomal subunit protein uS11 (133 aa).

Positions 1–23 (MPPKTRGAVRKPRKKDKKNIALG) are disordered. Basic residues predominate over residues 7-17 (GAVRKPRKKDK).

Belongs to the universal ribosomal protein uS11 family. Part of the 30S ribosomal subunit. Interacts with proteins S7 and S18. Binds to IF-3.

Its function is as follows. Located on the platform of the 30S subunit, it bridges several disparate RNA helices of the 16S rRNA. Forms part of the Shine-Dalgarno cleft in the 70S ribosome. This Pseudarthrobacter chlorophenolicus (strain ATCC 700700 / DSM 12829 / CIP 107037 / JCM 12360 / KCTC 9906 / NCIMB 13794 / A6) (Arthrobacter chlorophenolicus) protein is Small ribosomal subunit protein uS11.